Consider the following 455-residue polypeptide: Bifunctional protein GlmU (455 aa).

Residues 1-226 (MSLDIVILAA…PMEVQGANDR (226 aa)) are pyrophosphorylase. UDP-N-acetyl-alpha-D-glucosamine-binding positions include 8–11 (LAAG), Lys22, Gln73, 78–79 (GT), 99–101 (YGD), Gly136, Glu151, Asn166, and Asn224. Mg(2+) is bound at residue Asp101. Asn224 is a Mg(2+) binding site. Residues 227-247 (RQLSELERHYQLREGRRLMAQ) form a linker region. The interval 248 to 455 (GVTLRDPARF…WKRPEKIKKS (208 aa)) is N-acetyltransferase. The UDP-N-acetyl-alpha-D-glucosamine site is built by Arg330 and Lys348. Residue His360 is the Proton acceptor of the active site. Residues Tyr363 and Asn374 each contribute to the UDP-N-acetyl-alpha-D-glucosamine site. Acetyl-CoA contacts are provided by residues Ala377, 383-384 (NY), Ser402, Ala420, and Arg437.

The protein in the N-terminal section; belongs to the N-acetylglucosamine-1-phosphate uridyltransferase family. In the C-terminal section; belongs to the transferase hexapeptide repeat family. As to quaternary structure, homotrimer. It depends on Mg(2+) as a cofactor.

The protein localises to the cytoplasm. The catalysed reaction is alpha-D-glucosamine 1-phosphate + acetyl-CoA = N-acetyl-alpha-D-glucosamine 1-phosphate + CoA + H(+). It carries out the reaction N-acetyl-alpha-D-glucosamine 1-phosphate + UTP + H(+) = UDP-N-acetyl-alpha-D-glucosamine + diphosphate. It participates in nucleotide-sugar biosynthesis; UDP-N-acetyl-alpha-D-glucosamine biosynthesis; N-acetyl-alpha-D-glucosamine 1-phosphate from alpha-D-glucosamine 6-phosphate (route II): step 2/2. Its pathway is nucleotide-sugar biosynthesis; UDP-N-acetyl-alpha-D-glucosamine biosynthesis; UDP-N-acetyl-alpha-D-glucosamine from N-acetyl-alpha-D-glucosamine 1-phosphate: step 1/1. It functions in the pathway bacterial outer membrane biogenesis; LPS lipid A biosynthesis. Catalyzes the last two sequential reactions in the de novo biosynthetic pathway for UDP-N-acetylglucosamine (UDP-GlcNAc). The C-terminal domain catalyzes the transfer of acetyl group from acetyl coenzyme A to glucosamine-1-phosphate (GlcN-1-P) to produce N-acetylglucosamine-1-phosphate (GlcNAc-1-P), which is converted into UDP-GlcNAc by the transfer of uridine 5-monophosphate (from uridine 5-triphosphate), a reaction catalyzed by the N-terminal domain. The protein is Bifunctional protein GlmU of Pseudomonas entomophila (strain L48).